The sequence spans 468 residues: Probable protein phosphatase 2C 52 (468 aa).

Positions 67-372 (SSCIFTQQGR…DDCAVVCLFL (306 aa)) constitute a PPM-type phosphatase domain. Residues aspartate 102, glycine 103, aspartate 317, and aspartate 363 each coordinate Mn(2+). The segment covering 413-429 (RSSSDQENETYGNVNTE) has biased composition (polar residues). A disordered region spans residues 413 to 442 (RSSSDQENETYGNVNTETDAEDEKTVGDQN).

Belongs to the PP2C family. The cofactor is Mg(2+). Mn(2+) serves as cofactor.

It catalyses the reaction O-phospho-L-seryl-[protein] + H2O = L-seryl-[protein] + phosphate. The enzyme catalyses O-phospho-L-threonyl-[protein] + H2O = L-threonyl-[protein] + phosphate. The sequence is that of Probable protein phosphatase 2C 52 from Arabidopsis thaliana (Mouse-ear cress).